The chain runs to 191 residues: Pyridoxal 5'-phosphate synthase subunit PdxT (191 aa).

46-48 (GES) is an L-glutamine binding site. The Nucleophile role is filled by C75. Residues R101 and 129–130 (IR) contribute to the L-glutamine site. Catalysis depends on charge relay system residues H165 and E167.

It belongs to the glutaminase PdxT/SNO family. In terms of assembly, in the presence of PdxS, forms a dodecamer of heterodimers. Only shows activity in the heterodimer.

It catalyses the reaction aldehydo-D-ribose 5-phosphate + D-glyceraldehyde 3-phosphate + L-glutamine = pyridoxal 5'-phosphate + L-glutamate + phosphate + 3 H2O + H(+). The enzyme catalyses L-glutamine + H2O = L-glutamate + NH4(+). Its pathway is cofactor biosynthesis; pyridoxal 5'-phosphate biosynthesis. Functionally, catalyzes the hydrolysis of glutamine to glutamate and ammonia as part of the biosynthesis of pyridoxal 5'-phosphate. The resulting ammonia molecule is channeled to the active site of PdxS. This chain is Pyridoxal 5'-phosphate synthase subunit PdxT, found in Staphylococcus saprophyticus subsp. saprophyticus (strain ATCC 15305 / DSM 20229 / NCIMB 8711 / NCTC 7292 / S-41).